The following is a 102-amino-acid chain: Small ribosomal subunit protein uS10 (102 aa).

The protein belongs to the universal ribosomal protein uS10 family. As to quaternary structure, part of the 30S ribosomal subunit.

Involved in the binding of tRNA to the ribosomes. The protein is Small ribosomal subunit protein uS10 of Cupriavidus metallidurans (strain ATCC 43123 / DSM 2839 / NBRC 102507 / CH34) (Ralstonia metallidurans).